The sequence spans 503 residues: Maturase K (503 aa).

The protein belongs to the intron maturase 2 family. MatK subfamily.

The protein localises to the plastid. The protein resides in the chloroplast. Functionally, usually encoded in the trnK tRNA gene intron. Probably assists in splicing its own and other chloroplast group II introns. The protein is Maturase K of Eucalyptus globulus subsp. globulus (Tasmanian blue gum).